A 411-amino-acid polypeptide reads, in one-letter code: Glutamate dehydrogenase 3, mitochondrial (411 aa).

Residues 1–18 constitute a mitochondrion transit peptide; sequence MNALAATSRNFRQAARLL. The active site involves K102.

Belongs to the Glu/Leu/Phe/Val dehydrogenases family. As to expression, barely expressed in leaves, spikelets and roots. Glumes and stamens specific accumulation.

It localises to the mitochondrion. The enzyme catalyses L-glutamate + NAD(+) + H2O = 2-oxoglutarate + NH4(+) + NADH + H(+). It carries out the reaction L-glutamate + NADP(+) + H2O = 2-oxoglutarate + NH4(+) + NADPH + H(+). This Oryza sativa subsp. japonica (Rice) protein is Glutamate dehydrogenase 3, mitochondrial (GDH3).